A 161-amino-acid chain; its full sequence is Allophycocyanin beta chain (161 aa).

N71 bears the N4-methylasparagine mark. A (2R,3E)-phycocyanobilin-binding site is contributed by C81.

This sequence belongs to the phycobiliprotein family. In terms of assembly, heterodimer of an alpha and a beta chain. Contains one covalently linked phycocyanobilin chromophore.

Its subcellular location is the cellular thylakoid membrane. Light-harvesting photosynthetic bile pigment-protein from the phycobiliprotein complex. Allophycocyanin has a maximum absorption at approximately 650 nanometers. This is Allophycocyanin beta chain (apcB) from Synechococcus sp. (strain ATCC 27144 / PCC 6301 / SAUG 1402/1) (Anacystis nidulans).